Reading from the N-terminus, the 182-residue chain is Large ribosomal subunit protein uL16 (182 aa).

The protein belongs to the universal ribosomal protein uL16 family.

The protein is Large ribosomal subunit protein uL16 of Pyrobaculum neutrophilum (strain DSM 2338 / JCM 9278 / NBRC 100436 / V24Sta) (Thermoproteus neutrophilus).